Consider the following 594-residue polypeptide: Probable ABC transporter-binding protein DR_1571 (594 aa).

A signal peptide spans 1-18; the sequence is MKKVMMLALALGASTSLA.

The protein belongs to the bacterial solute-binding protein 5 family.

In terms of biological role, probably part of a binding-protein-dependent transport system. In Deinococcus radiodurans (strain ATCC 13939 / DSM 20539 / JCM 16871 / CCUG 27074 / LMG 4051 / NBRC 15346 / NCIMB 9279 / VKM B-1422 / R1), this protein is Probable ABC transporter-binding protein DR_1571.